We begin with the raw amino-acid sequence, 573 residues long: MRTENTATLNLMWGALILEELARLGVQHVCMAPGSRSTPLTLAAAQQTKLKRHLHFDERGLGFMALGLAKASCAPVAIITTSGTAVANLYPAIVEAWLTHVPLIVLSGDRPPELLGCGANQAIVQPAIFANYAQQVNLPTPDAHIAPQMLLTTLDEAVANQTRPVHINCMYREPLYPSEMSGTILDSESPYLRPLQTWLQHAKPYTQYGKSEQLSSPSDDAIMRFVHGKGVIIAGTLTPEQDPQQLIALSQKIGWPLLTDAQSQLRQHPAAIGNIDQLLQHPKARNLLQEADRVLVFGGRLLSKRLIAYLAEQNWHSYWQVLPQQDRLDPSHNAKHIWHANAAQFAQLNWYRSSSANWANTLVTYNDELHSLFVRNIDQGEFGEAQVIRAIANTRPLEQQLFIGNSLPVRLYDMYAPVSCCTATTYTNRGASGIDGLLATACGIAAHQGKPTSLIIGDLSQLHDLNSFAIARSLTSPLVIIILNNDGGNIFNLLPVPNEELRSDYYRLSHGLEFGYAAAMFNLPYNQVDNLADFQSCYHEALDYQGASVIEVSVSQHQASEQIAALNLWVKQS.

The protein belongs to the TPP enzyme family. MenD subfamily. Homodimer. It depends on Mg(2+) as a cofactor. The cofactor is Mn(2+). Thiamine diphosphate serves as cofactor.

The catalysed reaction is isochorismate + 2-oxoglutarate + H(+) = 5-enolpyruvoyl-6-hydroxy-2-succinyl-cyclohex-3-ene-1-carboxylate + CO2. The protein operates within quinol/quinone metabolism; 1,4-dihydroxy-2-naphthoate biosynthesis; 1,4-dihydroxy-2-naphthoate from chorismate: step 2/7. It participates in quinol/quinone metabolism; menaquinone biosynthesis. Its function is as follows. Catalyzes the thiamine diphosphate-dependent decarboxylation of 2-oxoglutarate and the subsequent addition of the resulting succinic semialdehyde-thiamine pyrophosphate anion to isochorismate to yield 2-succinyl-5-enolpyruvyl-6-hydroxy-3-cyclohexene-1-carboxylate (SEPHCHC). The polypeptide is 2-succinyl-5-enolpyruvyl-6-hydroxy-3-cyclohexene-1-carboxylate synthase (Shewanella sp. (strain ANA-3)).